Consider the following 184-residue polypeptide: Photosystem I assembly protein Ycf4 (184 aa).

2 helical membrane passes run 21–41 (YFWA…GLSS) and 63–83 (IIMT…WLTI).

This sequence belongs to the Ycf4 family.

The protein resides in the plastid. It localises to the chloroplast thylakoid membrane. Functionally, seems to be required for the assembly of the photosystem I complex. This is Photosystem I assembly protein Ycf4 from Gracilaria tenuistipitata var. liui (Red alga).